Reading from the N-terminus, the 517-residue chain is Cytochrome P450 52A8 (517 aa).

C464 is a heme binding site.

It belongs to the cytochrome P450 family. The cofactor is heme.

Functionally, together with an NADPH cytochrome P450 the enzyme system catalyzes the terminal hydroxylation as the first step in the assimilation of alkanes and fatty acids. Preferentially hydroxylates lauric acid. The polypeptide is Cytochrome P450 52A8 (CYP52A8) (Candida tropicalis (Yeast)).